A 1325-amino-acid polypeptide reads, in one-letter code: Lysine-specific demethylase 3A (1325 aa).

3 disordered regions span residues 249 to 284 (SKRI…QGHV), 300 to 333 (PANK…RRSV), and 372 to 399 (QNGK…TGLK). Over residues 274-283 (SPEVSQSQGH) the composition is skewed to polar residues. Low complexity predominate over residues 378 to 390 (SLISSRSSSLSDS). The segment at 669–694 (CDVCDTTIFNLRWVCSKCGFGVCVDC) adopts a C6-type zinc-finger fold. Disordered regions lie at residues 772 to 791 (TLKE…SLQQ) and 798 to 819 (PQLP…TASV). Positions 888-892 (LRNLL) match the LXXLL motif motif. Residues 1062 to 1285 (MPSRFDDLMK…HCFWLTQEFR (224 aa)) enclose the JmjC domain. Fe cation contacts are provided by His-1124, Asp-1126, and His-1253.

The protein belongs to the JHDM2 histone demethylase family. Fe(2+) serves as cofactor.

It is found in the cytoplasm. The protein resides in the nucleus. The enzyme catalyses N(6),N(6)-dimethyl-L-lysyl(9)-[histone H3] + 2 2-oxoglutarate + 2 O2 = L-lysyl(9)-[histone H3] + 2 formaldehyde + 2 succinate + 2 CO2. Its function is as follows. Histone demethylase that specifically demethylates 'Lys-9' of histone H3, thereby playing a central role in histone code. Preferentially demethylates mono- and dimethylated H3 'Lys-9' residue, with a preference for dimethylated residue, while it has weak or no activity on trimethylated H3 'Lys-9'. Demethylation of Lys residue generates formaldehyde and succinate. This chain is Lysine-specific demethylase 3A (KDM3A), found in Gallus gallus (Chicken).